The sequence spans 485 residues: MGLVNIMRFITFAYIICGGFILTRTSGTSASASPATPTTNTGEGTSSPVTPTYTTSTDSNNSTATNNSTDVNGTEATPTPSHPHSHENTITCTNSLISVPYYTSVTINCSTTVSVNHSEYRLEIHLNQRTPFSDTPPGDQENYVNHNATKDQTLLLFSTAHSSAKSRRVGQLGVIPDRLPKRQLFNLPAHTNGGTNFPLNIKSIDWRTAGVYVWYLFAKNGSLINSTSVTVLTYNAPLMDLSVHPSLKGENHRAVCVVASYFPHNSVKLRWYKNAKEVDFTKYVTNASSVWVDGLITRISTVSIPADPDEEYPPSLRCSIEWYRDEVSFSRMAKAGTPSVFVAPTVSVNVEDGAAVCTAECVPSNGVFVSWVVNDHLPGVPSQDVTTGVCSSHPGLVNMRSSRPLSEENGEREYNCIIEGYPDGLPMFSDSVVYDASPIVEDMPVLTGIIAVTCGAAALALVVLITAVCFYCSKPSQVPYKKADF.

The signal sequence occupies residues 1–32 (MGLVNIMRFITFAYIICGGFILTRTSGTSASA). Positions 28–72 (TSASASPATPTTNTGEGTSSPVTPTYTTSTDSNNSTATNNSTDVN) are enriched in low complexity. A disordered region spans residues 28 to 88 (TSASASPATP…TPSHPHSHEN (61 aa)). The Virion surface segment spans residues 33 to 444 (SPATPTTNTG…DASPIVEDMP (412 aa)). N-linked (GlcNAc...) asparagine; by host glycosylation is found at N60, N61, N66, N67, N72, N108, N116, N147, N220, N225, and N286. The cysteines at positions 92 and 109 are disulfide-linked. One can recognise an Ig-like domain in the interval 237–330 (PLMDLSVHPS…EWYRDEVSFS (94 aa)). Cystine bridges form between C256–C318, C357–C416, and C361–C390. A helical transmembrane segment spans residues 445–468 (VLTGIIAVTCGAAALALVVLITAV). Over 469–485 (CFYCSKPSQVPYKKADF) the chain is Cytoplasmic.

The protein belongs to the herpesviridae glycoprotein C family. In terms of assembly, interacts with host complement component C3; this interaction inhibits host immune response by disregulating complement cascade.

Its subcellular location is the virion membrane. In terms of biological role, essential for the initial attachment to heparan sulfate moieties of the host cell surface proteoglycans. Also plays a role in host immune evasion by inhibiting the host complement cascade activation. This Equine herpesvirus 4 (strain 1942) (EHV-4) protein is Envelope glycoprotein C (gC).